Here is a 142-residue protein sequence, read N- to C-terminus: Large ribosomal subunit protein uL11 (142 aa).

This sequence belongs to the universal ribosomal protein uL11 family. As to quaternary structure, part of the ribosomal stalk of the 50S ribosomal subunit. Interacts with L10 and the large rRNA to form the base of the stalk. L10 forms an elongated spine to which L12 dimers bind in a sequential fashion forming a multimeric L10(L12)X complex. One or more lysine residues are methylated.

In terms of biological role, forms part of the ribosomal stalk which helps the ribosome interact with GTP-bound translation factors. This is Large ribosomal subunit protein uL11 from Mycolicibacterium gilvum (strain PYR-GCK) (Mycobacterium gilvum (strain PYR-GCK)).